We begin with the raw amino-acid sequence, 307 residues long: Protoheme IX farnesyltransferase (307 aa).

Transmembrane regions (helical) follow at residues 32–52, 65–85, 108–128, 131–151, 158–178, 186–206, 251–271, and 287–307; these read MGIV…ALHF, FFTI…NNYI, PGFA…FLLL, PMAV…YTLW, LNTV…WAAI, IAWM…LALA, LGIT…ALGL, and FVYS…VTFF.

It belongs to the UbiA prenyltransferase family. Protoheme IX farnesyltransferase subfamily. Interacts with CtaA.

Its subcellular location is the cell membrane. The enzyme catalyses heme b + (2E,6E)-farnesyl diphosphate + H2O = Fe(II)-heme o + diphosphate. It participates in porphyrin-containing compound metabolism; heme O biosynthesis; heme O from protoheme: step 1/1. In terms of biological role, converts heme B (protoheme IX) to heme O by substitution of the vinyl group on carbon 2 of heme B porphyrin ring with a hydroxyethyl farnesyl side group. This is Protoheme IX farnesyltransferase from Bacillus mycoides (strain KBAB4) (Bacillus weihenstephanensis).